The following is a 213-amino-acid chain: ER lumen protein-retaining receptor erd-2.2 (213 aa).

Topologically, residues 1–2 (MN) are lumenal. The chain crosses the membrane as a helical span at residues 3–21 (IFRISADMSHLLAIIILLL). The Cytoplasmic segment spans residues 22 to 35 (KIWKSRSCSGISAR). Residues 36 to 53 (SQILFALVFTARYLDLFS) form a helical membrane-spanning segment. Residues 54–61 (TYISLYNT) lie on the Lumenal side of the membrane. The chain crosses the membrane as a helical span at residues 62 to 80 (TMKITFLAATYATVYLMFF). At 81-96 (KFRSTYMRESDTFRVE) the chain is on the cytoplasmic side. A helical membrane pass occupies residues 97-110 (LLIVPAAILALLIN). Topologically, residues 111-117 (HDFAPFE) are lumenal. The chain crosses the membrane as a helical span at residues 118 to 137 (LLWTFSIYLEAVAILPQLFL). The Cytoplasmic segment spans residues 138–149 (LQSTGSAEVITA). The chain crosses the membrane as a helical span at residues 150–168 (HYLFALGSYRALYIFNWIY). Residues 169-178 (RYYTEDYFDP) lie on the Lumenal side of the membrane. A helical membrane pass occupies residues 179–199 (IVVVAGIVQTVLYADFFYLYV). The Cytoplasmic portion of the chain corresponds to 200 to 213 (TRVVQTRKGMELPI).

It belongs to the ERD2 family.

It is found in the endoplasmic reticulum membrane. In terms of biological role, required for the retention of luminal endoplasmic reticulum proteins. Determines the specificity of the luminal ER protein retention system. Also required for normal vesicular traffic through the Golgi. The sequence is that of ER lumen protein-retaining receptor erd-2.2 from Caenorhabditis elegans.